We begin with the raw amino-acid sequence, 66 residues long: Large ribosomal subunit protein uL29 (66 aa).

Belongs to the universal ribosomal protein uL29 family.

This is Large ribosomal subunit protein uL29 from Petrotoga mobilis (strain DSM 10674 / SJ95).